Consider the following 188-residue polypeptide: Large ribosomal subunit protein eL18 (188 aa).

Lys-119 participates in a covalent cross-link: Glycyl lysine isopeptide (Lys-Gly) (interchain with G-Cter in SUMO2). Ser-130 is modified (phosphoserine). The segment at 150-188 (RHFGKAPGTPHSHTKPYVRSKGRKFERARGRRASRGYKN) is disordered. Thr-158 carries the phosphothreonine modification. 2 stretches are compositionally biased toward basic residues: residues 161–171 (SHTKPYVRSKG) and 178–188 (RGRRASRGYKN). Lys-164 participates in a covalent cross-link: Glycyl lysine isopeptide (Lys-Gly) (interchain with G-Cter in SUMO2).

This sequence belongs to the eukaryotic ribosomal protein eL18 family. In terms of assembly, component of the large ribosomal subunit.

It localises to the cytoplasm. It is found in the cytosol. The protein resides in the rough endoplasmic reticulum. Functionally, component of the large ribosomal subunit. The ribosome is a large ribonucleoprotein complex responsible for the synthesis of proteins in the cell. This is Large ribosomal subunit protein eL18 (Rpl18) from Mus musculus (Mouse).